A 348-amino-acid chain; its full sequence is Putative methylesterase 14, chloroplastic (348 aa).

2 disordered regions span residues 1–29 (MGNK…MNRS) and 60–80 (GSMS…SDPF). The transit peptide at 1–76 (MGNKIISMMK…GSTSTRKRTL (76 aa)) directs the protein to the chloroplast. Serine 77 carries the post-translational modification Phosphoserine. Residue serine 172 is the Acyl-ester intermediate of the active site. Residues aspartate 299 and histidine 327 each act as charge relay system in the active site.

This sequence belongs to the AB hydrolase superfamily. Methylesterase family.

The protein localises to the plastid. Its subcellular location is the chloroplast. Functionally, putative methylesterase. This is Putative methylesterase 14, chloroplastic from Arabidopsis thaliana (Mouse-ear cress).